The following is a 334-amino-acid chain: Biotin synthase (334 aa).

In terms of domain architecture, Radical SAM core spans 41-260 (TRLETASLLS…IAVARIMMPR (220 aa)). Cys-56, Cys-60, and Cys-63 together coordinate [4Fe-4S] cluster. [2Fe-2S] cluster-binding residues include Cys-100, Cys-131, Cys-191, and Arg-264.

It belongs to the radical SAM superfamily. Biotin synthase family. In terms of assembly, homodimer. Requires [4Fe-4S] cluster as cofactor. It depends on [2Fe-2S] cluster as a cofactor.

The enzyme catalyses (4R,5S)-dethiobiotin + (sulfur carrier)-SH + 2 reduced [2Fe-2S]-[ferredoxin] + 2 S-adenosyl-L-methionine = (sulfur carrier)-H + biotin + 2 5'-deoxyadenosine + 2 L-methionine + 2 oxidized [2Fe-2S]-[ferredoxin]. The protein operates within cofactor biosynthesis; biotin biosynthesis; biotin from 7,8-diaminononanoate: step 2/2. Functionally, catalyzes the conversion of dethiobiotin (DTB) to biotin by the insertion of a sulfur atom into dethiobiotin via a radical-based mechanism. This is Biotin synthase from Bradyrhizobium sp. (strain ORS 278).